A 200-amino-acid polypeptide reads, in one-letter code: Probable nicotinate-nucleotide adenylyltransferase (200 aa).

Belongs to the NadD family.

It carries out the reaction nicotinate beta-D-ribonucleotide + ATP + H(+) = deamido-NAD(+) + diphosphate. Its pathway is cofactor biosynthesis; NAD(+) biosynthesis; deamido-NAD(+) from nicotinate D-ribonucleotide: step 1/1. Catalyzes the reversible adenylation of nicotinate mononucleotide (NaMN) to nicotinic acid adenine dinucleotide (NaAD). This is Probable nicotinate-nucleotide adenylyltransferase from Clavibacter sepedonicus (Clavibacter michiganensis subsp. sepedonicus).